Consider the following 620-residue polypeptide: Endoglucanase 21 (620 aa).

The interval 1 to 39 is disordered; that stretch reads MYGRDPWGGPLEINAADSMTDDDRSRNLQDLDRATPSRP. At 1–70 the chain is on the cytoplasmic side; it reads MYGRDPWGGP…DLGCILVSRK (70 aa). The segment covering 21–39 has biased composition (basic and acidic residues); sequence DDDRSRNLQDLDRATPSRP. Residues 71-91 form a helical; Signal-anchor for type II membrane protein membrane-spanning segment; it reads IFLWTLGTIVVTALLSGFITL. The Extracellular portion of the chain corresponds to 92 to 620; that stretch reads IVKTLPHHHH…TPPPPAPWTP (529 aa). N-linked (GlcNAc...) asparagine glycosylation is found at Asn-108 and Asn-134. Asp-166 functions as the Nucleophile in the catalytic mechanism. 6 N-linked (GlcNAc...) asparagine glycosylation sites follow: Asn-217, Asn-325, Asn-346, Asn-409, Asn-426, and Asn-482. Residues His-514 and Asp-561 contribute to the active site. Asn-567 carries N-linked (GlcNAc...) asparagine glycosylation. Glu-570 is an active-site residue.

The protein belongs to the glycosyl hydrolase 9 (cellulase E) family. In terms of tissue distribution, expressed in conductive tissues of young roots, cotyledons, rosette leaves, cauline leaves and sepals. Expressed in the leaf trichome support cells.

Its subcellular location is the cell membrane. It catalyses the reaction Endohydrolysis of (1-&gt;4)-beta-D-glucosidic linkages in cellulose, lichenin and cereal beta-D-glucans.. In Arabidopsis thaliana (Mouse-ear cress), this protein is Endoglucanase 21 (KOR3).